The sequence spans 380 residues: Cytochrome b (380 aa).

4 helical membrane-spanning segments follow: residues 34–54 (FGSL…FLAM), 78–99 (WLLR…YCHI), 114–134 (WNVG…GYVL), and 179–199 (FFAF…IDLV). Residues H84 and H98 each contribute to the heme b site. H183 contacts heme b. H202 contacts a ubiquinone. Transmembrane regions (helical) follow at residues 227-247 (TKDT…ALLF), 289-309 (LGGV…PLLN), 321-341 (LSQA…WIGS), and 348-369 (FVLI…GFPL).

The protein belongs to the cytochrome b family. In terms of assembly, the main subunits of complex b-c1 are: cytochrome b, cytochrome c1 and the Rieske protein. The cofactor is heme b.

The protein resides in the mitochondrion inner membrane. Functionally, component of the ubiquinol-cytochrome c reductase complex (complex III or cytochrome b-c1 complex) that is part of the mitochondrial respiratory chain. The b-c1 complex mediates electron transfer from ubiquinol to cytochrome c. Contributes to the generation of a proton gradient across the mitochondrial membrane that is then used for ATP synthesis. This Paracentrotus lividus (Common sea urchin) protein is Cytochrome b (MT-CYB).